Consider the following 555-residue polypeptide: CTP synthase (555 aa).

An amidoligase domain region spans residues 1–267 (MTKFVFVTGG…AQQVLKFMHL (267 aa)). Serine 13 is a CTP binding site. Serine 13 is a UTP binding site. Residues 14–19 (SIGKGI) and aspartate 71 each bind ATP. Mg(2+) contacts are provided by aspartate 71 and glutamate 141. Residues 148 to 150 (DIE), 188 to 193 (KTKPTQ), and lysine 224 each bind CTP. Residues 188-193 (KTKPTQ) and lysine 224 contribute to the UTP site. Residue alanine 242 coordinates ATP. Residues 299-535 (YVQLSDAYLS…VGACLADNGN (237 aa)) form the Glutamine amidotransferase type-1 domain. Glycine 354 serves as a coordination point for L-glutamine. The active-site Nucleophile; for glutamine hydrolysis is cysteine 381. L-glutamine-binding positions include 382-385 (LGMQ), glutamate 405, and arginine 463. Catalysis depends on residues histidine 508 and glutamate 510. The segment at 536–555 (NANHHDSTPAEPLVSEPLSS) is disordered.

Belongs to the CTP synthase family. In terms of assembly, homotetramer.

The catalysed reaction is UTP + L-glutamine + ATP + H2O = CTP + L-glutamate + ADP + phosphate + 2 H(+). It catalyses the reaction L-glutamine + H2O = L-glutamate + NH4(+). The enzyme catalyses UTP + NH4(+) + ATP = CTP + ADP + phosphate + 2 H(+). It functions in the pathway pyrimidine metabolism; CTP biosynthesis via de novo pathway; CTP from UDP: step 2/2. Its activity is regulated as follows. Allosterically activated by GTP, when glutamine is the substrate; GTP has no effect on the reaction when ammonia is the substrate. The allosteric effector GTP functions by stabilizing the protein conformation that binds the tetrahedral intermediate(s) formed during glutamine hydrolysis. Inhibited by the product CTP, via allosteric rather than competitive inhibition. Its function is as follows. Catalyzes the ATP-dependent amination of UTP to CTP with either L-glutamine or ammonia as the source of nitrogen. Regulates intracellular CTP levels through interactions with the four ribonucleotide triphosphates. The sequence is that of CTP synthase from Acaryochloris marina (strain MBIC 11017).